The sequence spans 170 residues: MLTLNTKLEKADQIDGELILPYDQREKSRLRATMVSGEDVAVFTVRGTILRDGDILRGDDGRIVKITAAKEPTYRVEALSPHQLLRCAFHLGNRHTQAQIGNGFLRIRKDAVLKEMLEGLGAKVEEELAAFEPESGAYGGGHHHHGDDGHHPLAPIPLRQKIHRPSDKAE.

Residues 134-170 (ESGAYGGGHHHHGDDGHHPLAPIPLRQKIHRPSDKAE) are disordered.

This sequence belongs to the UreE family.

It is found in the cytoplasm. In terms of biological role, involved in urease metallocenter assembly. Binds nickel. Probably functions as a nickel donor during metallocenter assembly. This Janthinobacterium sp. (strain Marseille) (Minibacterium massiliensis) protein is Urease accessory protein UreE.